The sequence spans 502 residues: TNF receptor-associated factor family protein DDB_G0268444 (502 aa).

An RING-type; degenerate zinc finger spans residues Cys28–Arg68. 2 consecutive TRAF-type zinc fingers follow at residues Lys129–Leu183 and Asn185–Asn243. The stretch at Ile261–Asp295 forms a coiled coil. The MATH domain maps to Lys368–Ile489.

The protein belongs to the TNF receptor-associated factor family. A subfamily.

The protein resides in the cytoplasm. Functionally, probable adapter protein and signal transducer that links members of the tumor necrosis factor receptor family to different signaling pathways by association with the receptor cytoplasmic domain and kinases. This Dictyostelium discoideum (Social amoeba) protein is TNF receptor-associated factor family protein DDB_G0268444.